The chain runs to 659 residues: Heparin-sulfate lyase (659 aa).

A signal peptide spans 1–24; sequence MTTKIFKRIIVFAVIALSSGNILA. Residue Y294 is the Proton acceptor of the active site.

It belongs to the polysaccharide lyase 12 family.

It localises to the periplasm. The enzyme catalyses Elimination of sulfate, appears to act on linkages between N-acetyl-D-glucosamine and uronate. Product is an unsaturated sugar.. Its function is as follows. Specifically cleaves heparan sulfate-rich regions of acidic polysaccharides. Does not act on N,O-desulfated glucosamine or N-acetyl-O-sulfated glucosamine linkages. Functions in cleaving metazoan heparan sulfate and providing carbon, nitrogen and sulfate sources for microorganisms. The sequence is that of Heparin-sulfate lyase (hepC) from Pedobacter heparinus (strain ATCC 13125 / DSM 2366 / CIP 104194 / JCM 7457 / NBRC 12017 / NCIMB 9290 / NRRL B-14731 / HIM 762-3).